The sequence spans 280 residues: Elongation factor 1-delta (280 aa).

An N-acetylalanine modification is found at alanine 2. Residue lysine 17 is modified to N6-acetyllysine. A phosphoserine mark is found at serine 37, serine 44, serine 60, serine 86, and serine 106. Lysine 107 bears the N6-acetyllysine mark. Residues 113-171 (SALEKSSPAHRATTPQTQHVSPMRQVEPPSRKAATATEDDEDDDIDLFGSDEEEDKEAT) form a disordered region. An N6-acetyllysine; alternate modification is found at lysine 117. Lysine 117 carries the post-translational modification N6-succinyllysine; alternate. Phosphoserine is present on serine 119. Threonine 129 is modified (phosphothreonine). Residue serine 133 is modified to Phosphoserine. Position 147 is a phosphothreonine (threonine 147). The span at 149–168 (TEDDEDDDIDLFGSDEEEDK) shows a compositional bias: acidic residues. A Phosphoserine; by CK2 modification is found at serine 162.

Belongs to the EF-1-beta/EF-1-delta family. As to quaternary structure, EF-1 is composed of 4 subunits: alpha, beta, delta, and gamma.

In terms of biological role, EF-1-beta and EF-1-delta stimulate the exchange of GDP bound to EF-1-alpha to GTP. The polypeptide is Elongation factor 1-delta (EEF1D) (Bos taurus (Bovine)).